Reading from the N-terminus, the 280-residue chain is Putative ABC transporter ATP-binding protein PYRAB03730 (280 aa).

Residues 4-244 enclose the ABC transporter domain; the sequence is IEVENVSFKY…VEFLERIGIR (241 aa). 38–45 provides a ligand contact to ATP; that stretch reads GPSGSGKS.

It belongs to the ABC transporter superfamily.

The protein resides in the cell membrane. Probably part of an ABC transporter complex. Responsible for energy coupling to the transport system. The chain is Putative ABC transporter ATP-binding protein PYRAB03730 from Pyrococcus abyssi (strain GE5 / Orsay).